The following is a 294-amino-acid chain: Nucleotide-binding protein LVIS_0651 (294 aa).

Residue 12–19 (GMSGAGKT) participates in ATP binding. Position 62–65 (62–65 (DLRS)) interacts with GTP.

This sequence belongs to the RapZ-like family.

Its function is as follows. Displays ATPase and GTPase activities. The protein is Nucleotide-binding protein LVIS_0651 of Levilactobacillus brevis (strain ATCC 367 / BCRC 12310 / CIP 105137 / JCM 1170 / LMG 11437 / NCIMB 947 / NCTC 947) (Lactobacillus brevis).